The chain runs to 660 residues: Nuclear factor erythroid 2-related factor 3 (660 aa).

The disordered stretch occupies residues S120–A214. Over residues G123–D135 the composition is skewed to gly residues. Basic and acidic residues-rich tracts occupy residues M173–Q186 and S204–A214. The 64-residue stretch at L541–L604 folds into the bZIP domain. The basic motif stretch occupies residues R543–K562. Residues I566–I573 form a leucine-zipper region.

Belongs to the bZIP family. CNC subfamily. In terms of assembly, heterodimer with MAFG, MAFK and other small MAF proteins that binds to the MAF recognition elements (MARE). In terms of tissue distribution, high level expression in brain, thymus, testis and placenta. Medium level expression in uterus, stomach and lung. Low level expression in kidney. No expression in heart, liver, spleen and ovary.

Its subcellular location is the nucleus. Activates erythroid-specific, globin gene expression. The protein is Nuclear factor erythroid 2-related factor 3 (Nfe2l3) of Mus musculus (Mouse).